The sequence spans 690 residues: MQKNKMVDLRAIFWFVVISSCAVAAPTCIQRSDFFKANGPYDINLRAMLSSLPSRVKDNEGFYKTPFKPGPNIAHGLGMCSRGTTTQDCSDCITSVSHTLLHTCPNQAEAIDWSSGDSLCLVRYSNHLINGSLDEDIIWAEYIEYKYNTSFGQTNLTEFKSTWQALMDRVINKVDGSLYANSIQELGSFPFRSIYAIAQCNKDLTKLNCEKCLQHLRIDNRSCCRGIQVGYIARTSCFMRWDLQPFLGLFINGMLPTPPSELDNGHSNTTKKDGKNISTGSIVAIAVVSVVVSTVLLALGYAVSRRRKAYQSFASENGYFSVSRRPRRPYGTASPDDATDDLTASSGSLRFDFRAIKAATSNFHKSNKLGHGGFGAVYKGMFPNGTEVAAKRLSKPSDQGEPEFKNEVLLVARLQHKNLVGLLGFSVEGEEKILVYEFVPNKSLDHFLFDPIKRVQLDWPRRHNIIEGITRGILYLHQDSRLTIIHRDLKASNILLDAEMNPKIADFGLARNFRVNQTEANTGRVVGTFGYMPPEYVANGQFSTKSDVYSFGVLILEIIGGKKNSSFHQIDGSVSNLVTHVWRLRNNGSLLELVDPAIGENYDKDEVIRCIHIGLLCVQENPDDRPSMSTIFRMLTNVSITLPVPQPPGFFFRERSEPNPLAERLLPGPSTSMSFTCSVDDASITSVRPR.

Positions 1–24 are cleaved as a signal peptide; that stretch reads MQKNKMVDLRAIFWFVVISSCAVA. The 105-residue stretch at 25 to 129 folds into the Gnk2-homologous 1 domain; it reads APTCIQRSDF…CLVRYSNHLI (105 aa). At 25–281 the chain is on the extracellular side; the sequence is APTCIQRSDF…KDGKNISTGS (257 aa). N-linked (GlcNAc...) asparagine glycans are attached at residues N130, N148, N155, N220, N268, and N276. Residues 140–246 enclose the Gnk2-homologous 2 domain; that stretch reads AEYIEYKYNT…CFMRWDLQPF (107 aa). A helical membrane pass occupies residues 282-302; sequence IVAIAVVSVVVSTVLLALGYA. At 303 to 690 the chain is on the cytoplasmic side; it reads VSRRRKAYQS…DASITSVRPR (388 aa). Positions 363 to 640 constitute a Protein kinase domain; sequence FHKSNKLGHG…IFRMLTNVSI (278 aa). Residues 369–377 and K391 each bind ATP; that span reads LGHGGFGAV. The residue at position 436 (Y436) is a Phosphotyrosine. The active-site Proton acceptor is D488. S492 carries the phosphoserine modification. The residue at position 528 (T528) is a Phosphothreonine. Phosphotyrosine is present on Y536.

Belongs to the protein kinase superfamily. Ser/Thr protein kinase family. CRK subfamily.

It is found in the membrane. It carries out the reaction L-seryl-[protein] + ATP = O-phospho-L-seryl-[protein] + ADP + H(+). It catalyses the reaction L-threonyl-[protein] + ATP = O-phospho-L-threonyl-[protein] + ADP + H(+). This chain is Cysteine-rich receptor-like protein kinase 21 (CRK21), found in Arabidopsis thaliana (Mouse-ear cress).